The chain runs to 342 residues: Predicted GPI-anchored protein 54 (342 aa).

The signal sequence occupies residues 1–16; sequence MRANYLLLLAATAVQA. N25, N105, and N151 each carry an N-linked (GlcNAc...) asparagine glycan. Residue G314 is the site of GPI-anchor amidated glycine attachment. Positions 315–342 are cleaved as a propeptide — removed in mature form; that stretch reads ASQSHPISSYSNYTISDYAPPISSYYSL. N326 carries N-linked (GlcNAc...) asparagine glycosylation.

The protein localises to the cell membrane. In Candida albicans (strain SC5314 / ATCC MYA-2876) (Yeast), this protein is Predicted GPI-anchored protein 54 (PGA54).